The following is a 517-amino-acid chain: Pentatricopeptide repeat-containing protein At1g13040, mitochondrial (517 aa).

A mitochondrion-targeting transit peptide spans 1-57 (MHQTLGAVRLAYRSRIANLVKSGMIDNAVQVFDEMRHSSYRVFSFDYNRFIGVLVRE). PPR repeat units follow at residues 8–42 (VRLA…SYRV), 43–77 (FSFD…GFSL), 78–112 (IPFT…GFIP), 113–147 (DIWA…GREP), 148–182 (DVVS…GVSP), 183–218 (DNKA…RVKL), 219–253 (STVV…GCEP), 254–288 (DLVT…GIQL), 289–320 (DAYS…MEPR), 324–358 (DVVS…GMVM), 359–393 (NVVT…GLSP), 394–428 (DRIF…EITP), 429–463 (DAIS…ECCP), and 464–498 (DELT…GFTL).

It belongs to the PPR family. P subfamily.

The protein resides in the mitochondrion. In Arabidopsis thaliana (Mouse-ear cress), this protein is Pentatricopeptide repeat-containing protein At1g13040, mitochondrial.